Consider the following 315-residue polypeptide: Tetraacyldisaccharide 4'-kinase (315 aa).

52–59 (TVGGTGKT) provides a ligand contact to ATP.

Belongs to the LpxK family.

It catalyses the reaction a lipid A disaccharide + ATP = a lipid IVA + ADP + H(+). The protein operates within glycolipid biosynthesis; lipid IV(A) biosynthesis; lipid IV(A) from (3R)-3-hydroxytetradecanoyl-[acyl-carrier-protein] and UDP-N-acetyl-alpha-D-glucosamine: step 6/6. Its function is as follows. Transfers the gamma-phosphate of ATP to the 4'-position of a tetraacyldisaccharide 1-phosphate intermediate (termed DS-1-P) to form tetraacyldisaccharide 1,4'-bis-phosphate (lipid IVA). The protein is Tetraacyldisaccharide 4'-kinase of Ruthia magnifica subsp. Calyptogena magnifica.